Reading from the N-terminus, the 179-residue chain is Inosine/xanthosine triphosphatase (179 aa).

Glu-71 contacts Mg(2+). Residue 71-72 (EA) coordinates substrate.

It belongs to the YjjX NTPase family. As to quaternary structure, homodimer. Mg(2+) serves as cofactor. The cofactor is Mn(2+).

It carries out the reaction XTP + H2O = XDP + phosphate + H(+). The enzyme catalyses ITP + H2O = IDP + phosphate + H(+). Its function is as follows. Phosphatase that hydrolyzes non-canonical purine nucleotides such as XTP and ITP to their respective diphosphate derivatives. Probably excludes non-canonical purines from DNA/RNA precursor pool, thus preventing their incorporation into DNA/RNA and avoiding chromosomal lesions. This chain is Inosine/xanthosine triphosphatase, found in Shewanella sp. (strain MR-4).